The following is a 664-amino-acid chain: Probable L-type lectin-domain containing receptor kinase V.3 (664 aa).

Residues 1–26 form the signal peptide; the sequence is MSMSCKINWLMVLVIIALSNLESSLG. The Extracellular portion of the chain corresponds to 27–278; it reads RLVFEGSAGL…YPKAESQVKL (252 aa). Residues 28 to 250 form a legume-lectin like region; sequence LVFEGSAGLM…AIHYMWMWYV (223 aa). N-linked (GlcNAc...) asparagine glycosylation is found at Asn69, Asn116, Asn122, Asn174, and Asn197. Residues 279–299 form a helical membrane-spanning segment; the sequence is IVLVTFLTLALFVALAASALI. The Cytoplasmic portion of the chain corresponds to 300-664; that stretch reads VFFYKRHKKL…LPSGRPRLFL (365 aa). In terms of domain architecture, Protein kinase spans 335–617; sequence NGFKQLLGEG…GVSELPDNLL (283 aa). ATP-binding positions include 341-349 and Lys364; that span reads LGEGGFGPV. Asp461 serves as the catalytic Proton acceptor.

It in the C-terminal section; belongs to the protein kinase superfamily. Ser/Thr protein kinase family. This sequence in the N-terminal section; belongs to the leguminous lectin family.

It localises to the cell membrane. The catalysed reaction is L-seryl-[protein] + ATP = O-phospho-L-seryl-[protein] + ADP + H(+). The enzyme catalyses L-threonyl-[protein] + ATP = O-phospho-L-threonyl-[protein] + ADP + H(+). The protein is Probable L-type lectin-domain containing receptor kinase V.3 (LECRK53) of Arabidopsis thaliana (Mouse-ear cress).